The sequence spans 465 residues: Glutathione reductase (465 aa).

Residues serine 16 and glycine 17 each contribute to the FAD site. Position 16 (serine 16) interacts with glutathione. Arginine 23 lines the glutathione pocket. Residues glutamate 42, threonine 49, cysteine 50, and lysine 58 each contribute to the FAD site. Cysteine 50 and cysteine 55 form a disulfide bridge. Residue tyrosine 108 coordinates glutathione. Glycine 124 contacts FAD. NADP(+) is bound by residues alanine 187, isoleucine 190, glutamate 193, arginine 210, arginine 216, and glycine 276. Aspartate 318 lines the FAD pocket. Leucine 324 contributes to the NADP(+) binding site. Position 326 (threonine 326) interacts with FAD. A glutathione-binding site is contributed by arginine 334. Valine 357 contributes to the NADP(+) binding site. FAD is bound at residue histidine 454. Histidine 454 (proton acceptor) is an active-site residue.

The protein belongs to the class-I pyridine nucleotide-disulfide oxidoreductase family. The cofactor is FAD.

It is found in the cytoplasm. It carries out the reaction 2 glutathione + NADP(+) = glutathione disulfide + NADPH + H(+). Its function is as follows. Catalyzes the reduction of glutathione disulfide (GSSG) to reduced glutathione (GSH). Constitutes the major mechanism to maintain a high GSH:GSSG ratio in the cytosol. The amount of GSH may affect the determination of cell fate. In Dictyostelium discoideum (Social amoeba), this protein is Glutathione reductase (gsr).